Reading from the N-terminus, the 199-residue chain is Melanocortin-2 receptor accessory protein 2B (199 aa).

A glycan (N-linked (GlcNAc...) asparagine) is linked at N6. A helical membrane pass occupies residues 39-59 (IVIGFWVGLAVFVIFMFFVLT).

This sequence belongs to the MRAP family. Interacts with mc4r. As to expression, expressed in adult brain.

The protein resides in the cell membrane. The protein localises to the endoplasmic reticulum membrane. Activator of melanocortin receptor 4 (mc4r), a receptor involved in energy homeostasis. Plays a role after larval development in the control of energy homeostasis and body weight regulation by increasing ligand-sensitivity of mc4r and mc4r-mediated generation of cAMP once the zebrafish begins feeding, increasing the capacity for regulated feeding and growth. This Danio rerio (Zebrafish) protein is Melanocortin-2 receptor accessory protein 2B (mrap2b).